Here is a 200-residue protein sequence, read N- to C-terminus: Protein GrpE (200 aa).

2 stretches are compositionally biased toward acidic residues: residues 1–17 (MNEQ…EQFD) and 34–44 (AFAEAGEETRD). The disordered stretch occupies residues 1–49 (MNEQPNEELQSEDEQFDPQETVSFEGETAANDEAFAEAGEETRDEEMTR).

The protein belongs to the GrpE family. As to quaternary structure, homodimer.

It localises to the cytoplasm. In terms of biological role, participates actively in the response to hyperosmotic and heat shock by preventing the aggregation of stress-denatured proteins, in association with DnaK and GrpE. It is the nucleotide exchange factor for DnaK and may function as a thermosensor. Unfolded proteins bind initially to DnaJ; upon interaction with the DnaJ-bound protein, DnaK hydrolyzes its bound ATP, resulting in the formation of a stable complex. GrpE releases ADP from DnaK; ATP binding to DnaK triggers the release of the substrate protein, thus completing the reaction cycle. Several rounds of ATP-dependent interactions between DnaJ, DnaK and GrpE are required for fully efficient folding. The polypeptide is Protein GrpE (Rhodopirellula baltica (strain DSM 10527 / NCIMB 13988 / SH1)).